The following is a 226-amino-acid chain: Neuromodulin (226 aa).

Residues 1–226 (MLCCMRRTKQ…EDPEADQEHA (226 aa)) are disordered. Residues Cys3 and Cys4 are each lipidated (S-palmitoyl cysteine). The span at 9–32 (KQVEKNDEDQKIEQDGVKPEDKAH) shows a compositional bias: basic and acidic residues. One can recognise an IQ domain in the interval 31–60 (AHKAATKIQASFRGHITRKKLKDEKKGDAP). The residue at position 41 (Ser41) is a Phosphoserine; by PHK and PKC. Positions 51–84 (LKDEKKGDAPAAEAEAKEKDDAPVADGVEKKEGD) are enriched in basic and acidic residues. The segment covering 85–97 (GSATTDAAPATSP) has biased composition (low complexity). Phosphoserine occurs at positions 86 and 96. Residues 98–127 (KAEEPSKAGDAPSEEKKGEGDAAPSEEKAG) are compositionally biased toward basic and acidic residues. A compositionally biased stretch (low complexity) spans 128–139 (SAETESAAKATT). Phosphoserine is present on residues Ser142, Ser144, and Ser145. Residues 146–158 (KAEDGPAKEEPKQ) show a composition bias toward basic and acidic residues. Residues 159-192 (ADVPAAVTDAAATTPAAEDAAKAAQPPTETAESS) show a composition bias toward low complexity. Thr172 carries the post-translational modification Phosphothreonine. Phosphoserine is present on residues Ser191 and Ser192. The span at 201-214 (VDEAKPKESARQDE) shows a compositional bias: basic and acidic residues. Positions 215-226 (GKEDPEADQEHA) are enriched in acidic residues.

The protein belongs to the neuromodulin family. As to quaternary structure, identified in a complex containing FGFR4, NCAM1, CDH2, PLCG1, FRS2, SRC, SHC1, GAP43 and CTTN. Interacts (via IQ domain) with calmodulin. Binds calmodulin with a greater affinity in the absence of Ca(2+) than in its presence. Post-translationally, phosphorylated. Phosphorylation of this protein by a protein kinase C is specifically correlated with certain forms of synaptic plasticity. In terms of processing, palmitoylated by ZDHHC3. Palmitoylation is regulated by ARF6 and is essential for plasma membrane association and axonal and dendritic filopodia induction. Deacylated by LYPLA2. As to expression, expressed in hippocampal neurons, with highest levels of expression in the CA4 and CA3 neurons and lower levels in CA1 neurons. Expressed in the dorsal root ganglion.

It is found in the cell membrane. The protein localises to the cell projection. Its subcellular location is the growth cone. The protein resides in the growth cone membrane. It localises to the synapse. It is found in the filopodium membrane. The protein localises to the perikaryon. Its subcellular location is the dendrite. The protein resides in the axon. It localises to the cytoplasm. In terms of biological role, this protein is associated with nerve growth. It is a major component of the motile 'growth cones' that form the tips of elongating axons. Plays a role in axonal and dendritic filopodia induction. In Rattus norvegicus (Rat), this protein is Neuromodulin (Gap43).